A 235-amino-acid chain; its full sequence is 7-cyano-7-deazaguanine synthase (235 aa).

Residue phenylalanine 13–leucine 23 coordinates ATP. Cysteine 197, cysteine 207, cysteine 210, and cysteine 213 together coordinate Zn(2+).

This sequence belongs to the QueC family. The cofactor is Zn(2+).

It catalyses the reaction 7-carboxy-7-deazaguanine + NH4(+) + ATP = 7-cyano-7-deazaguanine + ADP + phosphate + H2O + H(+). The protein operates within purine metabolism; 7-cyano-7-deazaguanine biosynthesis. In terms of biological role, catalyzes the ATP-dependent conversion of 7-carboxy-7-deazaguanine (CDG) to 7-cyano-7-deazaguanine (preQ(0)). The protein is 7-cyano-7-deazaguanine synthase of Solidesulfovibrio magneticus (strain ATCC 700980 / DSM 13731 / RS-1) (Desulfovibrio magneticus).